The following is a 272-amino-acid chain: Type II secretion system protein C (272 aa).

Topologically, residues 1 to 16 (MNISKLPPLSPSVIRR) are cytoplasmic. A helical membrane pass occupies residues 17–35 (ILFYLLMLLFCQQLAMIFW). Topologically, residues 36–272 (RIGLPDNAPV…DIYMEFGGDE (237 aa)) are periplasmic.

Belongs to the GSP C family.

The protein localises to the cell inner membrane. Involved in a type II secretion system (T2SS, formerly general secretion pathway, GSP) for the export of proteins. Required for the translocation of the multiple pectic enzymes. This Dickeya dadantii (strain 3937) (Erwinia chrysanthemi (strain 3937)) protein is Type II secretion system protein C (outC).